Here is a 311-residue protein sequence, read N- to C-terminus: tRNA-cytidine(32) 2-sulfurtransferase (311 aa).

The short motif at 47 to 52 is the PP-loop motif element; sequence SGGKDS. The [4Fe-4S] cluster site is built by cysteine 122, cysteine 125, and cysteine 213.

Belongs to the TtcA family. Homodimer. It depends on Mg(2+) as a cofactor. [4Fe-4S] cluster serves as cofactor.

The protein resides in the cytoplasm. It carries out the reaction cytidine(32) in tRNA + S-sulfanyl-L-cysteinyl-[cysteine desulfurase] + AH2 + ATP = 2-thiocytidine(32) in tRNA + L-cysteinyl-[cysteine desulfurase] + A + AMP + diphosphate + H(+). The protein operates within tRNA modification. Its function is as follows. Catalyzes the ATP-dependent 2-thiolation of cytidine in position 32 of tRNA, to form 2-thiocytidine (s(2)C32). The sulfur atoms are provided by the cysteine/cysteine desulfurase (IscS) system. This chain is tRNA-cytidine(32) 2-sulfurtransferase, found in Escherichia coli O139:H28 (strain E24377A / ETEC).